The following is an 869-amino-acid chain: Valine--tRNA ligase (869 aa).

Residues Pro47–Asn57 carry the 'HIGH' region motif. The 'KMSKS' region motif lies at Lys521–Ser525. Lys524 lines the ATP pocket.

The protein belongs to the class-I aminoacyl-tRNA synthetase family. ValS type 2 subfamily.

The protein localises to the cytoplasm. It carries out the reaction tRNA(Val) + L-valine + ATP = L-valyl-tRNA(Val) + AMP + diphosphate. Its function is as follows. Catalyzes the attachment of valine to tRNA(Val). As ValRS can inadvertently accommodate and process structurally similar amino acids such as threonine, to avoid such errors, it has a 'posttransfer' editing activity that hydrolyzes mischarged Thr-tRNA(Val) in a tRNA-dependent manner. This chain is Valine--tRNA ligase, found in Methanosarcina barkeri (strain Fusaro / DSM 804).